A 598-amino-acid polypeptide reads, in one-letter code: DNA primase (598 aa).

Residues 38-62 (CPFHDEKTPSFTVSEDKQICHCFGC) form a CHC2-type zinc finger. The Toprim domain occupies 260–341 (DEIILLEGFM…NVYVVQLPSG (82 aa)). Mg(2+) is bound by residues E266, D310, and D312.

It belongs to the DnaG primase family. In terms of assembly, monomer. Interacts with DnaB. It depends on Zn(2+) as a cofactor. Mg(2+) serves as cofactor.

The catalysed reaction is ssDNA + n NTP = ssDNA/pppN(pN)n-1 hybrid + (n-1) diphosphate.. RNA polymerase that catalyzes the synthesis of short RNA molecules used as primers for DNA polymerase during DNA replication. This chain is DNA primase, found in Staphylococcus epidermidis (strain ATCC 12228 / FDA PCI 1200).